Reading from the N-terminus, the 512-residue chain is UDP-N-acetylmuramoyl-L-alanyl-D-glutamate--2,6-diaminopimelate ligase (512 aa).

Serine 32 is a UDP-N-acetyl-alpha-D-muramoyl-L-alanyl-D-glutamate binding site. 114–120 (GTNGKTT) is an ATP binding site. UDP-N-acetyl-alpha-D-muramoyl-L-alanyl-D-glutamate is bound by residues 156-157 (TT), serine 183, and arginine 191. At lysine 223 the chain carries N6-carboxylysine. Meso-2,6-diaminopimelate-binding positions include arginine 395, 419-422 (DNPR), glycine 469, and glutamate 473. Residues 419–422 (DNPR) carry the Meso-diaminopimelate recognition motif motif.

The protein belongs to the MurCDEF family. MurE subfamily. Requires Mg(2+) as cofactor. Carboxylation is probably crucial for Mg(2+) binding and, consequently, for the gamma-phosphate positioning of ATP.

The protein localises to the cytoplasm. It catalyses the reaction UDP-N-acetyl-alpha-D-muramoyl-L-alanyl-D-glutamate + meso-2,6-diaminopimelate + ATP = UDP-N-acetyl-alpha-D-muramoyl-L-alanyl-gamma-D-glutamyl-meso-2,6-diaminopimelate + ADP + phosphate + H(+). It functions in the pathway cell wall biogenesis; peptidoglycan biosynthesis. Catalyzes the addition of meso-diaminopimelic acid to the nucleotide precursor UDP-N-acetylmuramoyl-L-alanyl-D-glutamate (UMAG) in the biosynthesis of bacterial cell-wall peptidoglycan. This chain is UDP-N-acetylmuramoyl-L-alanyl-D-glutamate--2,6-diaminopimelate ligase, found in Chlorobium phaeobacteroides (strain DSM 266 / SMG 266 / 2430).